A 343-amino-acid chain; its full sequence is Holliday junction branch migration complex subunit RuvB (343 aa).

The interval 1–181 (MDRIIDTAAT…FGIVQRLEFY (181 aa)) is large ATPase domain (RuvB-L). ATP-binding positions include I20, R21, G62, K65, T66, T67, 128–130 (EDF), R171, Y181, and R218. Position 66 (T66) interacts with Mg(2+). Positions 182–252 (SPEDLARIVR…VAQAAMQMLK (71 aa)) are small ATPAse domain (RuvB-S). The tract at residues 255 to 343 (QGGFDELDRR…SAFTDPEDLF (89 aa)) is head domain (RuvB-H). DNA contacts are provided by R291, R310, and R315.

This sequence belongs to the RuvB family. In terms of assembly, homohexamer. Forms an RuvA(8)-RuvB(12)-Holliday junction (HJ) complex. HJ DNA is sandwiched between 2 RuvA tetramers; dsDNA enters through RuvA and exits via RuvB. An RuvB hexamer assembles on each DNA strand where it exits the tetramer. Each RuvB hexamer is contacted by two RuvA subunits (via domain III) on 2 adjacent RuvB subunits; this complex drives branch migration. In the full resolvosome a probable DNA-RuvA(4)-RuvB(12)-RuvC(2) complex forms which resolves the HJ.

Its subcellular location is the cytoplasm. The enzyme catalyses ATP + H2O = ADP + phosphate + H(+). In terms of biological role, the RuvA-RuvB-RuvC complex processes Holliday junction (HJ) DNA during genetic recombination and DNA repair, while the RuvA-RuvB complex plays an important role in the rescue of blocked DNA replication forks via replication fork reversal (RFR). RuvA specifically binds to HJ cruciform DNA, conferring on it an open structure. The RuvB hexamer acts as an ATP-dependent pump, pulling dsDNA into and through the RuvAB complex. RuvB forms 2 homohexamers on either side of HJ DNA bound by 1 or 2 RuvA tetramers; 4 subunits per hexamer contact DNA at a time. Coordinated motions by a converter formed by DNA-disengaged RuvB subunits stimulates ATP hydrolysis and nucleotide exchange. Immobilization of the converter enables RuvB to convert the ATP-contained energy into a lever motion, pulling 2 nucleotides of DNA out of the RuvA tetramer per ATP hydrolyzed, thus driving DNA branch migration. The RuvB motors rotate together with the DNA substrate, which together with the progressing nucleotide cycle form the mechanistic basis for DNA recombination by continuous HJ branch migration. Branch migration allows RuvC to scan DNA until it finds its consensus sequence, where it cleaves and resolves cruciform DNA. The polypeptide is Holliday junction branch migration complex subunit RuvB (Xylella fastidiosa (strain 9a5c)).